A 924-amino-acid chain; its full sequence is Protein SMAX1-LIKE 2 (924 aa).

Residues I8–N181 form the Clp R domain. Residues L12–L83 are repeat 1. Positions T86–Q105 are enriched in low complexity. A disordered region spans residues T86–P107. Residues L109–N181 are repeat 2. The disordered stretch occupies residues T522–K552. Positions F780–E784 match the EAR motif.

The protein belongs to the ClpA/ClpB family. In terms of assembly, interacts probably with TPL/TPR in an EAR-motif dependent manner. In terms of tissue distribution, expressed in seedlings and leaves. Detected in roots and axillary branches.

Its function is as follows. Probable component of a transcriptional corepressor complex that acts specifically in the karrikin pathway. Controls seedling growth redundantly with SMAX1, but is not involved in leaf morphology, shoot branching or germination control. The sequence is that of Protein SMAX1-LIKE 2 from Arabidopsis thaliana (Mouse-ear cress).